A 176-amino-acid polypeptide reads, in one-letter code: Peptide deformylase (176 aa).

Fe cation contacts are provided by C94 and H136. E137 is a catalytic residue. Residue H140 participates in Fe cation binding.

The protein belongs to the polypeptide deformylase family. It depends on Fe(2+) as a cofactor.

It carries out the reaction N-terminal N-formyl-L-methionyl-[peptide] + H2O = N-terminal L-methionyl-[peptide] + formate. Removes the formyl group from the N-terminal Met of newly synthesized proteins. Requires at least a dipeptide for an efficient rate of reaction. N-terminal L-methionine is a prerequisite for activity but the enzyme has broad specificity at other positions. The protein is Peptide deformylase of Mesorhizobium japonicum (strain LMG 29417 / CECT 9101 / MAFF 303099) (Mesorhizobium loti (strain MAFF 303099)).